The sequence spans 232 residues: Ubiquinone biosynthesis O-methyltransferase (232 aa).

S-adenosyl-L-methionine contacts are provided by arginine 36, glycine 55, aspartate 76, and methionine 120.

This sequence belongs to the methyltransferase superfamily. UbiG/COQ3 family.

It carries out the reaction a 3-demethylubiquinol + S-adenosyl-L-methionine = a ubiquinol + S-adenosyl-L-homocysteine + H(+). The catalysed reaction is a 3-(all-trans-polyprenyl)benzene-1,2-diol + S-adenosyl-L-methionine = a 2-methoxy-6-(all-trans-polyprenyl)phenol + S-adenosyl-L-homocysteine + H(+). Its pathway is cofactor biosynthesis; ubiquinone biosynthesis. O-methyltransferase that catalyzes the 2 O-methylation steps in the ubiquinone biosynthetic pathway. The protein is Ubiquinone biosynthesis O-methyltransferase of Burkholderia thailandensis (strain ATCC 700388 / DSM 13276 / CCUG 48851 / CIP 106301 / E264).